We begin with the raw amino-acid sequence, 244 residues long: Ubiquitin carboxyl-terminal hydrolase mug105 (244 aa).

The active-site Nucleophile is Cys-42. Catalysis depends on His-165, which acts as the Proton acceptor. The active site involves Asp-183.

Belongs to the peptidase C78 family. ZUFSP subfamily.

The protein resides in the cytoplasm. The catalysed reaction is Thiol-dependent hydrolysis of ester, thioester, amide, peptide and isopeptide bonds formed by the C-terminal Gly of ubiquitin (a 76-residue protein attached to proteins as an intracellular targeting signal).. Its function is as follows. Deubiquitinase with endodeubiquitinase activity that preferentially cleaves 'Lys-48'-linked polyubiquitin chains. Shows only weak activity against 'Lys-63' and 'Lys-11'-linked chains. Has a role in meiosis. This Schizosaccharomyces pombe (strain 972 / ATCC 24843) (Fission yeast) protein is Ubiquitin carboxyl-terminal hydrolase mug105 (mug105).